The sequence spans 571 residues: FAD-binding monooxygenase VdtE (571 aa).

FAD is bound by residues 44–47 (VWYW), 56–57 (DS), and Tyr-62. 54–56 (RVD) is a binding site for NADP(+). NADP(+) is bound by residues 187 to 193 (TGASAVQ) and 210 to 211 (RT).

It belongs to the FAD-binding monooxygenase family. FAD is required as a cofactor.

The enzyme catalyses 9,10-dihydroxy-7-methoxy-3-(2-oxopropyl)-1H-benzo[g]isochromen-1-one + NADPH + O2 + H(+) = methyl 2-[(3S)-9,10-dihydroxy-7-methoxy-1-oxo-1H,3H,4H-naphtho[2,3-c]pyran-3-yl]acetate + NADP(+) + H2O. It carries out the reaction (3S)-9,10-dihydroxy-7-methoxy-3-(2-oxopropyl)-1H,3H,4H-naphtho[2,3-c]pyran-1-one + NADPH + O2 + H(+) = semiviriditoxin + NADP(+) + H2O. The protein operates within secondary metabolite biosynthesis. FAD-binding monooxygenase; part of the gene cluster that mediates the biosynthesis of viriditoxin, one of the 'classical' secondary metabolites produced by fungi and that has antibacterial activity. The first step is performed by the polyketide synthase VdtA which condenses one acetyl-CoA and 6 malonyl-CoA units to form the heptaketide monomer backbone of viriditoxin. The product of VdtA is then O-methylated on C7 by the O-methyltransferase VdtC. The O-methyl group is important for the stereoselective coupling of the monomers at the final step of viriditoxin biosynthesis. The short-chain dehydrogenase/reductase VdtF then acts as a stereospecific reductase converting the pyrone to dihydropyrone via the reduction of the C3-C4 double bond. The FAD-binding monooxygenase VdtE then converts the ketone group into a methyl-ester group to yield semi-viriditoxin. Finally, the laccase VdtB is involved in dimerization of 2 semi-viriditoxin molecules to yield the final viriditoxin. VdtB is responsible for the regioselective 6,6'-coupling of semi-viriditoxin, which yields (M)-viriditoxin and (P)-viriditoxin at a ratio of 1:2. The non-catalytic carboxylesterase-like protein VdtD affects the stereochemistical outcome of the coupling. The highly reducing polyketide synthase VdtX is not involved in viriditoxin synthesis, but might possibly play a role in the production of additional metabolites not identified yet. The polypeptide is FAD-binding monooxygenase VdtE (Byssochlamys spectabilis (Paecilomyces variotii)).